The primary structure comprises 53 residues: uncharacterized protein (53 aa).

Residues 13-35 (FLLHSFTFPIAHCPSFSWASFFF) form a helical membrane-spanning segment.

The protein resides in the membrane. This is an uncharacterized protein from Saccharomyces cerevisiae (strain ATCC 204508 / S288c) (Baker's yeast).